The sequence spans 1066 residues: MSWLRTSPLRQSLTRNSGGNGSGGSGNSGNASATVRQRPIDAATDCDPRACYDSFCKHWQQAHEIIQHAGPPTHDDVLGVVSHLDYMVTLLLVELHHCNKVSLPTADAAPPTAPCLEYLLSENLLDKLYEWASTTGRYANAVRLEQLKLYELLVSHSRHQLLCHEPFLRPLLKILASSQGEIFPPDLEKRLVILLNQLCVVLMQNVHLLDLFFFSAQTQVQEQIQNGSLAAPKSGTTTNFIIFSLLIPYVHREGSLGHQARDALLLCMALSQKNSNIGHYIAQYSSICPLLVTGLGGLYSRLPNSIEVSAIDWHRITPDDVAEIPELTLFMNALEFCNAVVQVAHEMIKQQLLDFMYQGFIVPVLGPAILQTLKGKHFQTNIDSQISAMSYLDLILRSITEPGLMRAFVKFLLDTEKFDGERILDALVERLHSPDANLCMVTMALFDTLLGLHCEDLMLELLLKYMLPGKHVPISHRHKINKIDPYLNTTEFFLELTPDVMKRARDLARPKSVHELVDPGAALSSTMLPSLPSPVMSKTIGANWNYYGHYTGDSLYANIQAYLFEAHSRIAQCQRDCGKWANNYRYQKWPRQGQVRATSHALELARQFFSEFGTATPVAVAAVASSELGEKQLDSLQSIGESSGYESFKWRPDDADANDATTTTATSDPDVEHNNSSNHNNSSINSSGRRDLWRVSHSARNEILLTDLDFSEDLFAQGTVNLGPFLNAIWGKLQTFTSNSLYVNLHLTGLITRLAWYPLPLIHSLLLRSDIAITSDTPSFHQVLRMLKQQIDAELPVAENSLEIIDVARSSLIDREFRLINARKVSDNSPLHQQHHQQQQLQHTTNSTHQQQQAQQRSTYATLSAATPMHATPTSAYDPFRRSDNKRRSISASISNIFGRKSTSSTAAANPNPASSGLSQIYAFFTGAASTLVGGINGEVNSRGVAQENPRGNTCETSLSTTPRLDAQATSASSTNSSIGGSTQTLSATHSSSTLHGVESGPQTASFNSEPVSMDSVASMGIIANTSGTERSRDLALCAVLLDEWLKELAAIALEQSVVLVTEQLL.

The segment covering 1–15 (MSWLRTSPLRQSLTR) has biased composition (polar residues). The tract at residues 1 to 33 (MSWLRTSPLRQSLTRNSGGNGSGGSGNSGNASA) is disordered. The segment covering 18–27 (GGNGSGGSGN) has biased composition (gly residues). S512 is subject to Phosphoserine. Disordered stretches follow at residues 647 to 688 (SFKW…NSSG), 827 to 885 (DNSP…RSDN), and 942 to 1010 (SRGV…FNSE). The segment covering 658 to 687 (NDATTTTATSDPDVEHNNSSNHNNSSINSS) has biased composition (low complexity). A Phosphoserine modification is found at S829. Residues 836–856 (HQQQQLQHTTNSTHQQQQAQQ) are compositionally biased toward low complexity. Over residues 950 to 963 (PRGNTCETSLSTTP) the composition is skewed to polar residues. Positions 967-996 (AQATSASSTNSSIGGSTQTLSATHSSSTLH) are enriched in low complexity. Residues 1001–1010 (GPQTASFNSE) are compositionally biased toward polar residues.

The protein belongs to the FHIP family.

The sequence is that of FHIP family protein GH13096 from Drosophila grimshawi (Hawaiian fruit fly).